A 370-amino-acid chain; its full sequence is MMKTVHVALGARSYDVEIGPGLIAEAGARIAPLLARKRVAVLTDETVAALHLEALREGLAAGGVTMEALALPPGESTKGWPQFERAADWLLDQKVERRDVVVAFGGGVIGDLAGFAAAVLRRGVRFVQIPTSLLAQVDSSVGGKTGINASHGKNLIGAFHQPSLVLADTAVLGTLTARDFLAGYGEVVKYGLLGDAAFFDWLEGQGPALAAGDMAARVEAVTRSVQMKADIVARDETEQGDRALLNLGHTFCHALEAATGYSDRLLHGEGVAIGCALAFELSARLGLCSQEDPSRVRAHLKAMGMKTDLTDIPGDLPTADVLVDLMAQDKKVVDGQLRFILARGIGQAFVTSDVPREAVLTVLEDALASC.

Residues 107-111, 131-132, Lys-144, and Lys-153 contribute to the NAD(+) site; these read GVIGD and TS. The Zn(2+) site is built by Glu-186, His-249, and His-267.

Belongs to the sugar phosphate cyclases superfamily. Dehydroquinate synthase family. It depends on Co(2+) as a cofactor. Zn(2+) is required as a cofactor. Requires NAD(+) as cofactor.

The protein resides in the cytoplasm. The catalysed reaction is 7-phospho-2-dehydro-3-deoxy-D-arabino-heptonate = 3-dehydroquinate + phosphate. The protein operates within metabolic intermediate biosynthesis; chorismate biosynthesis; chorismate from D-erythrose 4-phosphate and phosphoenolpyruvate: step 2/7. Functionally, catalyzes the conversion of 3-deoxy-D-arabino-heptulosonate 7-phosphate (DAHP) to dehydroquinate (DHQ). The protein is 3-dehydroquinate synthase of Ruegeria pomeroyi (strain ATCC 700808 / DSM 15171 / DSS-3) (Silicibacter pomeroyi).